We begin with the raw amino-acid sequence, 265 residues long: Type 1 encapsulin shell protein (265 aa).

Belongs to the encapsulin family. Family 1 subfamily. In terms of assembly, found in a complex with DyP, suggesting it is the native cargo protein. Monomers form pentamers, which assemble to form hollow shells composed of 60 subunits with several openings.

The protein localises to the encapsulin nanocompartment. Its subcellular location is the cell membrane. In terms of biological role, shell component of a type 1 encapsulin nanocompartment. Assembles into proteinaceous shells 23-24 nm in diameter with 2-2.5 nm thick walls. Cargo protein DyP is targeted to the interior via its C-terminal extension; probably only 1 DyP hexamer is incorporated into each shell. Probably involved in protection against oxidative damage. The protein is Type 1 encapsulin shell protein of Mycolicibacterium paratuberculosis (strain ATCC BAA-968 / K-10) (Mycobacterium paratuberculosis).